The chain runs to 345 residues: GTPase Obg (345 aa).

Residues 1–158 enclose the Obg domain; the sequence is MFIDSVKITL…RLVRLELKLI (158 aa). In terms of domain architecture, OBG-type G spans 159 to 339; the sequence is ADVGLVGFPN…LKFMLLEEIK (181 aa). GTP contacts are provided by residues 165-172, 190-194, 212-215, 280-283, and 320-322; these read GFPNVGKS, FTTLT, DIPG, SKSD, and SSL. Residues Ser172 and Thr192 each coordinate Mg(2+).

This sequence belongs to the TRAFAC class OBG-HflX-like GTPase superfamily. OBG GTPase family. Monomer. Mg(2+) is required as a cofactor.

It is found in the cytoplasm. In terms of biological role, an essential GTPase which binds GTP, GDP and possibly (p)ppGpp with moderate affinity, with high nucleotide exchange rates and a fairly low GTP hydrolysis rate. Plays a role in control of the cell cycle, stress response, ribosome biogenesis and in those bacteria that undergo differentiation, in morphogenesis control. In Campylobacter jejuni subsp. doylei (strain ATCC BAA-1458 / RM4099 / 269.97), this protein is GTPase Obg.